Reading from the N-terminus, the 311-residue chain is Probable cysteine synthase (311 aa).

Lys45 is subject to N6-(pyridoxal phosphate)lysine. Pyridoxal 5'-phosphate contacts are provided by residues Asn75, 182–186 (GTGGT), and Ser270.

The protein belongs to the cysteine synthase/cystathionine beta-synthase family. Requires pyridoxal 5'-phosphate as cofactor.

It carries out the reaction O-acetyl-L-serine + hydrogen sulfide = L-cysteine + acetate. The protein operates within amino-acid biosynthesis; L-cysteine biosynthesis; L-cysteine from L-serine: step 2/2. This Bacillus subtilis (strain 168) protein is Probable cysteine synthase (ytkP).